We begin with the raw amino-acid sequence, 73 residues long: Conotoxin Asp7/Gla(3)-TxVI (73 aa).

An N-terminal signal peptide occupies residues 1–19 (MQKLIILLLVAAVLMSTQA). Positions 20–44 (VLQEKRPKEKIKFLSKRKTDAEKQQ) are excised as a propeptide. Intrachain disulfides connect C48-C62, C55-C66, and C61-C71. 2 positions are modified to 4-hydroxyproline: P49 and P54. E60 carries the post-translational modification 4-carboxyglutamate. Residue W64 is modified to 6'-bromotryptophan.

As to expression, expressed by the venom duct.

The protein resides in the secreted. The sequence is that of Conotoxin Asp7/Gla(3)-TxVI from Conus textile (Cloth-of-gold cone).